The primary structure comprises 978 residues: Exocyst complex component 5 (978 aa).

Polar residues predominate over residues 1–11; that stretch reads MSWARNIQSRI. Disordered stretches follow at residues 1-87 and 122-246; these read MSWA…TTTQ and TSPS…TTPY. Low complexity-rich tracts occupy residues 36 to 52 and 62 to 86; these read PSSP…TSLT and SQPT…TTTT. The segment covering 122–142 has biased composition (polar residues); the sequence is TSPSMASPIGTSTGIQNPNAK. The segment covering 143 to 245 has biased composition (low complexity); that stretch reads PSSLPSPSQS…QPTPIKQTTP (103 aa). Positions 303-325 form a coiled coil; the sequence is NTQLQLSQLESNIDRRLDDLAEE.

This sequence belongs to the SEC10 family. As to quaternary structure, the exocyst complex is composed of sec3/exoc1, sec5/exoc2, sec6/exoc3, sec8/exoc4, sec10/exoc5, sec15/exoc6, exo70/exoc7 and exo84/exoc8.

In terms of biological role, component of the exocyst complex involved in the docking of exocytic vesicles with fusion sites on the plasma membrane. The sequence is that of Exocyst complex component 5 (exoc5) from Dictyostelium discoideum (Social amoeba).